The following is a 312-amino-acid chain: Aquaporin-6 (312 aa).

Topologically, residues 1 to 50 are cytoplasmic; it reads MDDKFDDDALPNSKTTAKDYEDKLPEYDYTTTFPNTWMRLREPFREYFAE. Residues 51-71 form a helical membrane-spanning segment; it reads FVGVAVLIIFGVGADCQVVLS. The Extracellular segment spans residues 72–89; it reads ANTGVASSPKGSYLSLNC. The chain crosses the membrane as a helical span at residues 90–110; sequence GWAIGTAMGVWISGGISGGHI. Positions 111–113 match the NPA 1 motif; sequence NPA. Topologically, residues 111-128 are cytoplasmic; the sequence is NPAVTLAMATWRGFPWWK. A helical membrane pass occupies residues 129 to 149; it reads VPGFIFAQLLGGIVGAGLVYV. At 150–183 the chain is on the extracellular side; sequence NYIHAIDIVEGGRHIRTLDTAGLFATYAADYMTN. N-linked (GlcNAc...) asparagine glycosylation occurs at N183. Residues 184–204 traverse the membrane as a helical segment; the sequence is LSCFFSEFLATAVLIIVIHAM. Over 205–213 the chain is Cytoplasmic; sequence NDKRNTPPP. Residues 214–234 form a helical membrane-spanning segment; that stretch reads AGIVPFVLFFLILGIGASLGM. The Extracellular segment spans residues 235–267; it reads ETGYAINPARDLGPRMLTAMVGYGRQVFAFRNQ. Positions 241 to 243 match the NPA 2 motif; the sequence is NPA. The helical transmembrane segment at 268–288 threads the bilayer; that stretch reads YWIWCPVLAPFLGAQVGTIFY. The Cytoplasmic segment spans residues 289 to 312; the sequence is DLFFYKGQDNVFGRLGSHIHISPA.

It belongs to the MIP/aquaporin (TC 1.A.8) family.

It is found in the membrane. It catalyses the reaction H2O(in) = H2O(out). In terms of biological role, water channel required to facilitate the transport of water across membranes. Does not mediate the transport carbon dioxide nor nitric oxide across the membrane. Plays a key role in root water transport of mycorrhizal plant such ectomycorrhizal white spruce or trembling aspen via the hydration at the hyphal-root interphase. Contributes in fungal cellular processes during the basidiocarp formation. In Laccaria bicolor (Bicoloured deceiver), this protein is Aquaporin-6.